A 212-amino-acid chain; its full sequence is Ribosomal RNA small subunit methyltransferase G (212 aa).

S-adenosyl-L-methionine-binding positions include Gly-73, Phe-78, 124–125 (IE), and Arg-137.

This sequence belongs to the methyltransferase superfamily. RNA methyltransferase RsmG family.

It localises to the cytoplasm. Specifically methylates the N7 position of a guanine in 16S rRNA. This is Ribosomal RNA small subunit methyltransferase G from Karelsulcia muelleri (strain GWSS) (Sulcia muelleri).